The primary structure comprises 1045 residues: FERM, ARHGEF and pleckstrin domain-containing protein 1 (1045 aa).

The segment at methionine 1–glycine 37 is disordered. Phosphoserine occurs at positions 20 and 23. The residue at position 24 (threonine 24) is a Phosphothreonine. In terms of domain architecture, FERM spans valine 40–glutamate 320. Residues serine 340, serine 373, serine 389, serine 403, serine 418, serine 427, and serine 433 each carry the phosphoserine modification. The segment at serine 392 to lysine 534 is disordered. Polar residues-rich tracts occupy residues threonine 471–glycine 489 and valine 496–proline 511. Phosphoserine is present on residues serine 510 and serine 514. In terms of domain architecture, DH spans lysine 540–threonine 730. The PH 1 domain occupies glutamate 759–aspartate 856. Phosphoserine occurs at positions 833, 872, and 878. Positions proline 866–arginine 902 are disordered. The residue at position 883 (threonine 883) is a Phosphothreonine. Serine 889, serine 896, and serine 899 each carry phosphoserine. One can recognise a PH 2 domain in the interval glutamate 932–serine 1029.

In terms of assembly, interacts with CADM1. Interacts with RAC1.

Its subcellular location is the cell membrane. It is found in the synapse. The protein localises to the synaptosome. It localises to the cytoplasm. The protein resides in the cytosol. Its subcellular location is the cell projection. It is found in the filopodium. The protein localises to the dendrite. It localises to the dendritic spine. Its function is as follows. Functions as a guanine nucleotide exchange factor for RAC1. May play a role in semaphorin signaling. Plays a role in the assembly and disassembly of dendritic filopodia, the formation of dendritic spines, regulation of dendrite length and ultimately the formation of synapses. The polypeptide is FERM, ARHGEF and pleckstrin domain-containing protein 1 (FARP1) (Pongo abelii (Sumatran orangutan)).